We begin with the raw amino-acid sequence, 970 residues long: Serine/threonine-protein kinase PLK4 (970 aa).

In terms of domain architecture, Protein kinase spans 12–265 (FKVGNLLGKG…LSSVLDHPFM (254 aa)). Residues 18 to 26 (LGKGSFAGV) and Lys-41 each bind ATP. N6-acetyllysine occurs at positions 45 and 46. Asp-136 (proton acceptor) is an active-site residue. Disordered regions lie at residues 323–458 (TVFP…NHLC) and 497–538 (SISP…HSVK). Over residues 328-356 (NKSSTDFSSSGDGNSFYTQWGNQETSNSG) the composition is skewed to polar residues. Positions 360–369 (VIQDAEERPH) are enriched in basic and acidic residues. A compositionally biased stretch (polar residues) spans 379 to 393 (SDRSGTSNSQSQAKT). Ser-401 carries the post-translational modification Phosphoserine. Over residues 438–454 (SSSSGSFERPDNNQALS) the composition is skewed to polar residues. Residues 504 to 515 (FQGHPDLQKDTS) are compositionally biased toward basic and acidic residues. The region spanning 586–699 (TLRSITSPLV…SRFVQLVRSK (114 aa)) is the Cryptic POLO box 1 (CPB1) domain. Ser-665 is modified (phosphoserine). The region spanning 700–813 (SPKITYFTRY…GRKPGSTSSP (114 aa)) is the Cryptic POLO box 2 (CPB2) domain. A disordered region spans residues 808-828 (GSTSSPKALSPPPSVDSNYPT). Residue Ser-817 is modified to Phosphoserine. A POLO box domain is found at 886–964 (QLLKSVFVKN…LSSILLMFSN (79 aa)).

It belongs to the protein kinase superfamily. Ser/Thr protein kinase family. CDC5/Polo subfamily. As to quaternary structure, homodimer. Interacts with CEP152 (via N-terminus). Interacts with CEP78; this interaction may be important for proper PLK4 localization to the centriole and PLK4-induced overduplication of centrioles. Interacts with CEP131. Interacts simultaneously with TENT5C and CEP192. Interacts with TENT5C; this interaction leads to the TENT5C recruitment in the centrosome. Interacts with CEP85; this interaction may be important in cell migration and centriole assembly. Post-translationally, acetylation by KAT2A and KAT2B impairs kinase activity by shifting the kinase to an inactive conformation. In terms of processing, ubiquitinated; leading to its degradation by the proteasome. Deubiquitinated by USP54; leading to PLK4 stabilization. Tyrosine-phosphorylated by TEC.

It is found in the cytoplasm. The protein localises to the cytoskeleton. Its subcellular location is the microtubule organizing center. The protein resides in the centrosome. It localises to the centriole. It is found in the nucleus. The protein localises to the nucleolus. Its subcellular location is the cleavage furrow. It catalyses the reaction L-seryl-[protein] + ATP = O-phospho-L-seryl-[protein] + ADP + H(+). The catalysed reaction is L-threonyl-[protein] + ATP = O-phospho-L-threonyl-[protein] + ADP + H(+). Its function is as follows. Serine/threonine-protein kinase that plays a central role in centriole duplication. Able to trigger procentriole formation on the surface of the parental centriole cylinder, leading to the recruitment of centriole biogenesis proteins such as SASS6, CPAP, CCP110, CEP135 and gamma-tubulin. When overexpressed, it is able to induce centrosome amplification through the simultaneous generation of multiple procentrioles adjoining each parental centriole during S phase. Phosphorylates 'Ser-151' of FBXW5 during the G1/S transition, leading to inhibit FBXW5 ability to ubiquitinate SASS6. Its central role in centriole replication suggests a possible role in tumorigenesis, centrosome aberrations being frequently observed in tumors. Also involved in deuterosome-mediated centriole amplification in multiciliated that can generate more than 100 centrioles. Also involved in trophoblast differentiation by phosphorylating HAND1, leading to disrupt the interaction between HAND1 and MDFIC and activate HAND1. Phosphorylates CDC25C and CHEK2. Required for the recruitment of STIL to the centriole and for STIL-mediated centriole amplification. Phosphorylates CEP131 at 'Ser-78' and PCM1 at 'Ser-372' which is essential for proper organization and integrity of centriolar satellites. This Homo sapiens (Human) protein is Serine/threonine-protein kinase PLK4.